The sequence spans 398 residues: Elongation factor Tu (398 aa).

A tr-type G domain is found at 10-207 (KPHVNIGTIG…TVDEYIPEPE (198 aa)). The segment at 19–26 (GHVDHGKT) is G1. 19 to 26 (GHVDHGKT) serves as a coordination point for GTP. Thr-26 provides a ligand contact to Mg(2+). Residues 63–67 (GITIN) form a G2 region. The segment at 84–87 (DAPG) is G3. GTP contacts are provided by residues 84 to 88 (DAPGH) and 139 to 142 (NKVD). Residues 139–142 (NKVD) form a G4 region. A G5 region spans residues 177 to 179 (SAL).

This sequence belongs to the TRAFAC class translation factor GTPase superfamily. Classic translation factor GTPase family. EF-Tu/EF-1A subfamily. As to quaternary structure, monomer.

It is found in the cytoplasm. It carries out the reaction GTP + H2O = GDP + phosphate + H(+). Its function is as follows. GTP hydrolase that promotes the GTP-dependent binding of aminoacyl-tRNA to the A-site of ribosomes during protein biosynthesis. This is Elongation factor Tu from Streptococcus agalactiae serotype V (strain ATCC BAA-611 / 2603 V/R).